A 101-amino-acid polypeptide reads, in one-letter code: UPF0235 protein MmarC7_0309 (101 aa).

The protein belongs to the UPF0235 family.

The protein is UPF0235 protein MmarC7_0309 of Methanococcus maripaludis (strain C7 / ATCC BAA-1331).